Here is a 199-residue protein sequence, read N- to C-terminus: Inactive glutathione S-transferase D3 (199 aa).

Residues Met-1–Asp-64 enclose the GST N-terminal domain. Glutathione is bound by residues His-34–Ile-36 and Glu-48–Arg-50. A GST C-terminal domain is found at Asp-70–Lys-199.

Belongs to the GST superfamily. Delta family. Homodimer.

Functionally, has no glutathione S-transferase activity. This is Inactive glutathione S-transferase D3 from Drosophila melanogaster (Fruit fly).